We begin with the raw amino-acid sequence, 351 residues long: Photosystem II D2 protein (351 aa).

The helical transmembrane segment at 39–59 threads the bilayer; that stretch reads CSYLALGGWLTGTTFVTSWYT. Histidine 116 contributes to the chlorophyll a binding site. A helical membrane pass occupies residues 123–139; the sequence is GFCLRQFEIARLVGIRP. Pheophytin a is bound by residues glutamine 128 and asparagine 141. Residues 151–164 traverse the membrane as a helical segment; sequence VFVSVFLMYPLGQA. Position 196 (histidine 196) interacts with chlorophyll a. Residues 206-226 traverse the membrane as a helical segment; it reads GALLCAIHGATVQNTLFEDGD. Histidine 213 and phenylalanine 260 together coordinate a plastoquinone. Residue histidine 213 coordinates Fe cation. Position 267 (histidine 267) interacts with Fe cation. A helical membrane pass occupies residues 277–293; sequence GLWTSAFGIVGLALNLR.

Belongs to the reaction center PufL/M/PsbA/D family. As to quaternary structure, PSII is composed of 1 copy each of membrane proteins PsbA, PsbB, PsbC, PsbD, PsbE, PsbF, PsbH, PsbI, PsbJ, PsbK, PsbL, PsbM, PsbT, PsbX, PsbY, PsbZ, Psb30/Ycf12, at least 3 peripheral proteins of the oxygen-evolving complex and a large number of cofactors. It forms dimeric complexes. The cofactor is The D1/D2 heterodimer binds P680, chlorophylls that are the primary electron donor of PSII, and subsequent electron acceptors. It shares a non-heme iron and each subunit binds pheophytin, quinone, additional chlorophylls, carotenoids and lipids. There is also a Cl(-1) ion associated with D1 and D2, which is required for oxygen evolution. The PSII complex binds additional chlorophylls, carotenoids and specific lipids..

The protein resides in the plastid. It localises to the chloroplast thylakoid membrane. The catalysed reaction is 2 a plastoquinone + 4 hnu + 2 H2O = 2 a plastoquinol + O2. Its function is as follows. Photosystem II (PSII) is a light-driven water:plastoquinone oxidoreductase that uses light energy to abstract electrons from H(2)O, generating O(2) and a proton gradient subsequently used for ATP formation. It consists of a core antenna complex that captures photons, and an electron transfer chain that converts photonic excitation into a charge separation. The D1/D2 (PsbA/PsbD) reaction center heterodimer binds P680, the primary electron donor of PSII as well as several subsequent electron acceptors. D2 is needed for assembly of a stable PSII complex. This is Photosystem II D2 protein from Gracilaria tenuistipitata var. liui (Red alga).